The sequence spans 594 residues: MKNIRNFSIIAHIDHGKSTLSDRFIQVCNGLSEREMKEQVLDSMDIERERGITIKAQSVTLDYVARDGQTYQLNFIDTPGHVDFSYEVSRSLAACEGALLVVDAAQGVEAQTVANCYTAIEQNLEVIPILNKIDLPSAEPDRVAEEIEEIIGIDATGATTCSAKTGIGVEDVLETIVAKVPAPEGDVNAKLQALIIDSWFDNYLGVVSLVRIKNGTLKKGEKFKVMSTGVSYQVDRVGVFTPKMKDLDHLKAGEVGFIVAGIKDIHGAPVGDTLTHTHNPTDKPVPGFKKVQPQVYAGMFTISSDDYPDFREALDKLSLNDASLFFEPEVSQALGFGFRCGFLGMLHMEIIQERLEREYNLDLITSAPTVVYKAVKKDGETIDVDSPSKLPEPGAIAEIHEPIVRANILVPKDYVGSVITICVEKRGVQVDLNYVGSQVSITYDLPMIEVVSDFFDTLKSVTKGYGSLDYELIRYEAADMVRLDVLINGDKVDALASIVHKDQAKYKGRELVERLKELIPRQMFEVAIQAAIGGTIVARSTVKALRKNVLAKCYGGDVSRKKKLLEKQKEGKKRMKNIGSVEIPQEAFLSVLKK.

The tr-type G domain occupies 2–184; that stretch reads KNIRNFSIIA…TIVAKVPAPE (183 aa). GTP contacts are provided by residues 14 to 19 and 131 to 134; these read DHGKST and NKID.

The protein belongs to the TRAFAC class translation factor GTPase superfamily. Classic translation factor GTPase family. LepA subfamily.

It localises to the cell inner membrane. The enzyme catalyses GTP + H2O = GDP + phosphate + H(+). Required for accurate and efficient protein synthesis under certain stress conditions. May act as a fidelity factor of the translation reaction, by catalyzing a one-codon backward translocation of tRNAs on improperly translocated ribosomes. Back-translocation proceeds from a post-translocation (POST) complex to a pre-translocation (PRE) complex, thus giving elongation factor G a second chance to translocate the tRNAs correctly. Binds to ribosomes in a GTP-dependent manner. This Francisella philomiragia subsp. philomiragia (strain ATCC 25017 / CCUG 19701 / FSC 153 / O#319-036) protein is Elongation factor 4.